Here is a 297-residue protein sequence, read N- to C-terminus: Formamidopyrimidine-DNA glycosylase (297 aa).

Proline 2 (schiff-base intermediate with DNA) is an active-site residue. Glutamate 3 serves as the catalytic Proton donor. Lysine 58 acts as the Proton donor; for beta-elimination activity in catalysis. DNA-binding residues include histidine 106, arginine 125, and arginine 168. The FPG-type zinc finger occupies 259 to 295; that stretch reads RVYDREGLACTARGCRGRVRRIVQAGRSTFYCETCQP. Arginine 285 functions as the Proton donor; for delta-elimination activity in the catalytic mechanism.

Belongs to the FPG family. In terms of assembly, monomer. Requires Zn(2+) as cofactor.

It catalyses the reaction Hydrolysis of DNA containing ring-opened 7-methylguanine residues, releasing 2,6-diamino-4-hydroxy-5-(N-methyl)formamidopyrimidine.. The catalysed reaction is 2'-deoxyribonucleotide-(2'-deoxyribose 5'-phosphate)-2'-deoxyribonucleotide-DNA = a 3'-end 2'-deoxyribonucleotide-(2,3-dehydro-2,3-deoxyribose 5'-phosphate)-DNA + a 5'-end 5'-phospho-2'-deoxyribonucleoside-DNA + H(+). Its function is as follows. Involved in base excision repair of DNA damaged by oxidation or by mutagenic agents. Acts as a DNA glycosylase that recognizes and removes damaged bases. Has a preference for oxidized purines, such as 7,8-dihydro-8-oxoguanine (8-oxoG). Has AP (apurinic/apyrimidinic) lyase activity and introduces nicks in the DNA strand. Cleaves the DNA backbone by beta-delta elimination to generate a single-strand break at the site of the removed base with both 3'- and 5'-phosphates. This is Formamidopyrimidine-DNA glycosylase from Methylobacterium sp. (strain 4-46).